Reading from the N-terminus, the 401-residue chain is Calreticulin (401 aa).

Positions 1–18 are cleaved as a signal peptide; sequence MRKELWLGLLLSSQAVLS. Cysteine 103 and cysteine 134 are disulfide-bonded. Positions 107, 109, 125, and 132 each coordinate an alpha-D-glucoside. 7 tandem repeats follow at residues 187-198, 206-217, 223-234, 241-252, 256-266, 270-280, and 284-294. Residues 187–252 are 4 X approximate repeats; sequence KESGTLEEDW…DATQPDDWDE (66 aa). 2 stretches are compositionally biased toward basic and acidic residues: residues 199–214 and 224–236; these read LKPK…KPAD and PEDK…DKEP. Positions 199–263 are disordered; sequence LKPKTIPDPE…EDGKWEAPMI (65 aa). The span at 246–256 shows a compositional bias: acidic residues; that stretch reads QPDDWDEEEDG. The interval 256-294 is 3 X approximate repeats; sequence GKWEAPMISNPKYKGEWKAKKIPNPAYKGVWKPRDIPNP. Aspartate 314 contributes to the an alpha-D-glucoside binding site. The tract at residues 341 to 401 is disordered; the sequence is DQTNGATKDA…EEEDDKKDEL (61 aa). Residues 348 to 381 are compositionally biased toward basic and acidic residues; the sequence is KDAEKKAFDSAEADKRKKEEDERKKQEEEEKKTA. Residues 382–401 are compositionally biased toward acidic residues; sequence EEDEDDDDEEEEEDDKKDEL. The short motif at 398-401 is the Prevents secretion from ER element; that stretch reads KDEL.

It belongs to the calreticulin family.

The protein localises to the endoplasmic reticulum lumen. Functionally, molecular calcium-binding chaperone promoting folding, oligomeric assembly and quality control in the ER via the calreticulin/calnexin cycle. This lectin may interact transiently with almost all of the monoglucosylated glycoproteins that are synthesized in the ER. This is Calreticulin from Euglena gracilis.